Consider the following 744-residue polypeptide: MRNFAMLLLLILLLHSLASFPICFARLFPMSLPFTRSKAHQMHFFHPYLNPSVAPTPSPAFSPNPSRIPPLRHKGHHRHRRWHLRRNATAVSPSSHDCQQTCVEPLTSTPFGSPCGCVFPMKVQLLLSVAPFSIFPVTNELEIEVAAGTYLEQSQVKIMGASADSENQGKTVVDINLVPLGEKFDNTTATLIYQRFRHKKVPLNETVFGDYEVTHISYPGIPSSSPNGDVTGDAPGGLPIPINATTFANKSQGIGFRTIAIIALSGFVLILVLVGAISIIVKWKKIGKSSNAVGPALAPSINKRPGAGSMFSSSARSSGSDSLMSSMATCALSVKTFTLSELEKATDRFSAKRVLGEGGFGRVYQGSMEDGTEVAVKLLTRDNQNRDREFIAEVEMLSRLHHRNLVKLIGICIEGRTRCLIYELVHNGSVESHLHEGTLDWDARLKIALGAARGLAYLHEDSNPRVIHRDFKASNVLLEDDFTPKVSDFGLAREATEGSQHISTRVMGTFGYVAPEYAMTGHLLVKSDVYSYGVVLLELLTGRRPVDMSQPSGEENLVTWARPLLANREGLEQLVDPALAGTYNFDDMAKVAAIASMCVHQEVSHRPFMGEVVQALKLIYNDADETCGDYCSQKDSSVPDSADFKGDLAPSDSSWWNLTPRLRYGQASSFITMDYSSGPLEDMENRPHSASSIPRVGGLILPNRSGPLRPMRSRRNFFRLRGSMSEHGGPSSSRHLWSGNGDWL.

The signal sequence occupies residues 1-19 (MRNFAMLLLLILLLHSLAS). Over 20–260 (FPICFARLFP…SQGIGFRTIA (241 aa)) the chain is Extracellular. A compositionally biased stretch (pro residues) spans 59 to 68 (PAFSPNPSRI). A disordered region spans residues 59-79 (PAFSPNPSRIPPLRHKGHHRH). Residues 70–79 (PLRHKGHHRH) show a composition bias toward basic residues. N-linked (GlcNAc...) asparagine glycans are attached at residues Asn-87, Asn-186, Asn-204, Asn-243, and Asn-249. A helical membrane pass occupies residues 261 to 281 (IIALSGFVLILVLVGAISIIV). Topologically, residues 282-744 (KWKKIGKSSN…HLWSGNGDWL (463 aa)) are cytoplasmic. One can recognise a Protein kinase domain in the interval 349 to 619 (FSAKRVLGEG…GEVVQALKLI (271 aa)). ATP-binding positions include 355 to 363 (LGEGGFGRV) and Lys-377. Asp-470 serves as the catalytic Proton acceptor. 2 disordered regions span residues 681–705 (EDMENRPHSASSIPRVGGLILPNRS) and 722–744 (GSMSEHGGPSSSRHLWSGNGDWL).

It belongs to the protein kinase superfamily. Ser/Thr protein kinase family. Autophosphorylated and phosphorylated by ACR4.

The protein localises to the cell membrane. It carries out the reaction L-seryl-[protein] + ATP = O-phospho-L-seryl-[protein] + ADP + H(+). The enzyme catalyses L-threonyl-[protein] + ATP = O-phospho-L-threonyl-[protein] + ADP + H(+). Functionally, required during the differentiation of the protoderm into shoots epidermis and cuticle. This Arabidopsis thaliana (Mouse-ear cress) protein is Receptor-like serine/threonine-protein kinase ALE2 (ALE2).